A 176-amino-acid polypeptide reads, in one-letter code: Calcium and integrin-binding family member 2 (176 aa).

EF-hand domains follow at residues R55–S90, P92–S127, and E133–F168. Positions 105, 107, 109, 116, 146, 148, 150, 152, and 157 each coordinate Ca(2+).

As to quaternary structure, monomer. Homodimer. Interacts with WHRN and MYO7A. Interacts with ITGA2B (via C-terminus cytoplasmic tail region); the interactions are stabilized/increased in a calcium and magnesium-dependent manner. Interacts with ITGA7 (via C-terminus cytoplasmic tail region); the interactions are stabilized/increased in a calcium and magnesium-dependent manner. Interacts with TMC1. Interacts with TMC2. In terms of tissue distribution, expressed in liver, heart, kidney, brain, spleen, stomach, ovary, testis and muscle.

The protein resides in the cytoplasm. It localises to the cell projection. It is found in the stereocilium. The protein localises to the photoreceptor inner segment. Its subcellular location is the cilium. The protein resides in the photoreceptor outer segment. It localises to the cell membrane. It is found in the sarcolemma. In terms of biological role, calcium- and integrin-binding protein that plays a role in intracellular calcium homeostasis. Acts as an auxiliary subunit of the sensory mechanoelectrical transduction (MET) channel in hair cells. Essential for mechanoelectrical transduction (MET) currents in auditory hair cells and thereby required for hearing. Regulates the function of hair cell mechanotransduction by controlling the distribution of transmembrane channel-like proteins TMC1 and TMC2, and by regulating the function of the MET channels in hair cells. Required for the maintenance of auditory hair cell stereocilia bundle morphology and function and for hair-cell survival in the cochlea. Critical for proper photoreceptor cell maintenance and function. Plays a role in intracellular calcium homeostasis by decreasing ATP-induced calcium release. This is Calcium and integrin-binding family member 2 (CIB2) from Ovis aries (Sheep).